Consider the following 123-residue polypeptide: Small ribosomal subunit protein uS12 (123 aa).

Positions 1 to 28 (MPTIQQLIRKPRQPKVKRSKSMHLEQCP) are disordered. Over residues 9–21 (RKPRQPKVKRSKS) the composition is skewed to basic residues. Asp-89 is modified (3-methylthioaspartic acid).

It belongs to the universal ribosomal protein uS12 family. As to quaternary structure, part of the 30S ribosomal subunit. Contacts proteins S8 and S17. May interact with IF1 in the 30S initiation complex.

Its function is as follows. With S4 and S5 plays an important role in translational accuracy. Interacts with and stabilizes bases of the 16S rRNA that are involved in tRNA selection in the A site and with the mRNA backbone. Located at the interface of the 30S and 50S subunits, it traverses the body of the 30S subunit contacting proteins on the other side and probably holding the rRNA structure together. The combined cluster of proteins S8, S12 and S17 appears to hold together the shoulder and platform of the 30S subunit. The polypeptide is Small ribosomal subunit protein uS12 (Ruegeria sp. (strain TM1040) (Silicibacter sp.)).